A 1342-amino-acid polypeptide reads, in one-letter code: DNA-directed RNA polymerase subunit beta (1342 aa).

It belongs to the RNA polymerase beta chain family. The RNAP catalytic core consists of 2 alpha, 1 beta, 1 beta' and 1 omega subunit. When a sigma factor is associated with the core the holoenzyme is formed, which can initiate transcription.

The enzyme catalyses RNA(n) + a ribonucleoside 5'-triphosphate = RNA(n+1) + diphosphate. Functionally, DNA-dependent RNA polymerase catalyzes the transcription of DNA into RNA using the four ribonucleoside triphosphates as substrates. This is DNA-directed RNA polymerase subunit beta from Salmonella agona (strain SL483).